We begin with the raw amino-acid sequence, 201 residues long: MMIGLTGGIASGKSSVAKMMEELGLPIVDADQVARDVVEPGMPAYEAIVAHFGTGVVNDDGTLNRKALGSIVFQQEEERRVLNEIVHPAVRRQMQQQKEQLIRSGEKTIVFDIPLLYESNLFYLVEKVLLVYVDEHTQLQRLMNRDQAGKDDAIHRIRSQRPLESKRDRADAIIDNSGTLDATKRQLIDILKRWKVIPEDQ.

The DPCK domain maps to M2–Q201. Position 10-15 (A10–S15) interacts with ATP.

Belongs to the CoaE family.

The protein resides in the cytoplasm. It catalyses the reaction 3'-dephospho-CoA + ATP = ADP + CoA + H(+). It participates in cofactor biosynthesis; coenzyme A biosynthesis; CoA from (R)-pantothenate: step 5/5. Catalyzes the phosphorylation of the 3'-hydroxyl group of dephosphocoenzyme A to form coenzyme A. The sequence is that of Dephospho-CoA kinase from Halalkalibacterium halodurans (strain ATCC BAA-125 / DSM 18197 / FERM 7344 / JCM 9153 / C-125) (Bacillus halodurans).